We begin with the raw amino-acid sequence, 346 residues long: Putative isoaspartyl peptidase/L-asparaginase (346 aa).

The Nucleophile role is filled by threonine 207. Substrate contacts are provided by residues arginine 235–aspartate 238 and threonine 257–glycine 260.

Belongs to the Ntn-hydrolases family. As to quaternary structure, heterodimer of an alpha and beta chain produced by autocleavage. Post-translationally, cleaved into an alpha and beta chain by autocatalysis; this activates the enzyme. The N-terminal residue of the beta subunit is responsible for the nucleophile hydrolase activity.

The enzyme catalyses Cleavage of a beta-linked Asp residue from the N-terminus of a polypeptide.. It catalyses the reaction L-asparagine + H2O = L-aspartate + NH4(+). In terms of biological role, has both L-asparaginase and beta-aspartyl peptidase activity. Does not have aspartylglucosaminidase activity and is inactive toward GlcNAc-L-Asn. Likewise, has no activity toward glutamine. The polypeptide is Putative isoaspartyl peptidase/L-asparaginase (Dictyostelium discoideum (Social amoeba)).